A 164-amino-acid polypeptide reads, in one-letter code: Aspartic proteinase nepenthesin-1 (164 aa).

The Peptidase A1 domain maps to 17–164 (YLMXLSIGTP…VSFVSAQCGA (148 aa)). The active site involves Asp-35. An N-linked (GlcNAc...) asparagine glycan is attached at Asn-93.

It belongs to the peptidase A1 family. As to expression, parenchymal cells surrounding the secretory glands.

The protein resides in the secreted. The enzyme catalyses Similar to pepsin, but also cleaves on either side of Asp and at Lys-|-Arg.. Inhibited by pepstatin and by diazoacetyl-D,L-norleucine methyl ester (DAN) in the presence of Cu(2+) ions. Extracellular proteinase found in the pitcher fluid of carnivorous plants. Digest prey for nitrogen uptake. This Nepenthes distillatoria (Pitcher plant) protein is Aspartic proteinase nepenthesin-1.